We begin with the raw amino-acid sequence, 318 residues long: Na(+)-translocating ferredoxin:NAD(+) oxidoreductase complex subunit D (318 aa).

The next 3 helical transmembrane spans lie at 35 to 55, 77 to 99, and 114 to 134; these read LAVA…ICVI, WSAV…WWIG, and FGGL…FLLA. Thr-156 is subject to FMN phosphoryl threonine. 3 consecutive transmembrane segments (helical) span residues 182–202, 206–226, and 261–281; these read VYGC…LYLI, IISW…ALLV, and IIYA…GGYP.

It belongs to the NqrB/RnfD family. As to quaternary structure, the complex is composed of six subunits: RnfA, RnfB, RnfC, RnfD, RnfE and RnfG. FMN serves as cofactor.

It localises to the cell membrane. It carries out the reaction 2 reduced [2Fe-2S]-[ferredoxin] + Na(+)(in) + NAD(+) + H(+) = 2 oxidized [2Fe-2S]-[ferredoxin] + Na(+)(out) + NADH. In terms of biological role, part of a membrane-bound complex that couples electron transfer with translocation of ions across the membrane. Couples electron transfer from reduced ferredoxin to NAD(+) with electrogenic movement of Na(+) out of the cell. Involved in caffeate respiration. This is Na(+)-translocating ferredoxin:NAD(+) oxidoreductase complex subunit D from Acetobacterium woodii (strain ATCC 29683 / DSM 1030 / JCM 2381 / KCTC 1655 / WB1).